The sequence spans 1004 residues: DNA-directed RNA polymerase subunit beta' (1004 aa).

The Mg(2+) site is built by Asp-388, Asp-390, and Asp-392. Zn(2+) contacts are provided by Cys-757, Cys-831, Cys-838, and Cys-841.

This sequence belongs to the RNA polymerase beta' chain family. In terms of assembly, the RNAP catalytic core consists of 2 alpha, 1 beta, 1 beta' and 1 omega subunit. When a sigma factor is associated with the core the holoenzyme is formed, which can initiate transcription. The cofactor is Mg(2+). Zn(2+) is required as a cofactor.

It catalyses the reaction RNA(n) + a ribonucleoside 5'-triphosphate = RNA(n+1) + diphosphate. Its function is as follows. DNA-dependent RNA polymerase catalyzes the transcription of DNA into RNA using the four ribonucleoside triphosphates as substrates. The protein is DNA-directed RNA polymerase subunit beta' of Oenococcus oeni (Leuconostoc oenos).